The following is a 714-amino-acid chain: Elongation factor G-like protein (714 aa).

The tr-type G domain maps to 21–289 (GGVRNVVLVG…VATRGFPSPM (269 aa)). A G1 region spans residues 30–37 (GPSGGGKT). 30-37 (GPSGGGKT) serves as a coordination point for GTP. Residues 73 to 77 (QRSVG) are G2. The tract at residues 94-97 (DTPG) is G3. Residues 94–98 (DTPGY) and 148–151 (TKLD) contribute to the GTP site. Residues 148 to 151 (TKLD) form a G4 region. Residues 267–269 (CSS) form a G5 region.

Belongs to the TRAFAC class translation factor GTPase superfamily. Classic translation factor GTPase family. EF-G/EF-2 subfamily.

The polypeptide is Elongation factor G-like protein (Mycobacterium tuberculosis (strain CDC 1551 / Oshkosh)).